The following is a 426-amino-acid chain: Glutamyl-tRNA reductase (426 aa).

Residues 52 to 55 (TCNR), serine 110, 115 to 117 (EYE), and glutamine 121 each bind substrate. The active-site Nucleophile is the cysteine 53. 190–195 (GAGEMG) contacts NADP(+).

It belongs to the glutamyl-tRNA reductase family. In terms of assembly, homodimer.

It catalyses the reaction (S)-4-amino-5-oxopentanoate + tRNA(Glu) + NADP(+) = L-glutamyl-tRNA(Glu) + NADPH + H(+). It participates in porphyrin-containing compound metabolism; protoporphyrin-IX biosynthesis; 5-aminolevulinate from L-glutamyl-tRNA(Glu): step 1/2. Catalyzes the NADPH-dependent reduction of glutamyl-tRNA(Glu) to glutamate 1-semialdehyde (GSA). This chain is Glutamyl-tRNA reductase, found in Saccharolobus islandicus (strain Y.N.15.51 / Yellowstone #2) (Sulfolobus islandicus).